The following is a 156-amino-acid chain: Small ribosomal subunit protein uS7 (156 aa).

Belongs to the universal ribosomal protein uS7 family. Part of the 30S ribosomal subunit. Contacts proteins S9 and S11.

One of the primary rRNA binding proteins, it binds directly to 16S rRNA where it nucleates assembly of the head domain of the 30S subunit. Is located at the subunit interface close to the decoding center, probably blocks exit of the E-site tRNA. The chain is Small ribosomal subunit protein uS7 from Frankia alni (strain DSM 45986 / CECT 9034 / ACN14a).